The following is a 332-amino-acid chain: Azadirone synthase LFS (332 aa).

In terms of domain architecture, Fe2OG dioxygenase spans 181–286 (ANANYTNMFH…RYSTGTFICP (106 aa)). Residues histidine 208, aspartate 210, and histidine 269 each coordinate Fe cation. Residue arginine 277 participates in 2-oxoglutarate binding.

It belongs to the iron/ascorbate-dependent oxidoreductase family. Requires Fe(2+) as cofactor. Mainly expressed in petioles and, to a lower extent, in roots.

It catalyses the reaction (1S,3bR,4R,5aR,9aR,9bR,11aS)-1-(1-hydroxy-4-oxobutan-2-yl)-3b,6,6,9a,11a-pentamethyl-7-oxo-1H,2H,3bH,4H,5H,5aH,6H,7H,9aH,9bH,10H,11H,11aH-cyclopenta[a]phenanthren-4-yl acetate + 2-oxoglutarate + O2 = azadirone + succinate + CO2 + 2 H2O. It participates in secondary metabolite biosynthesis; terpenoid biosynthesis. Functionally, 2-oxoglutarate-Fe(II) type oxidoreductase involved in the biosynthesis of limonoids triterpene natural products such as azadirachtin, an antifeedant widely used as bioinsecticide, and possessing many medicinal applications including anti-tumoral, anti-malarial, anti-rheumatic, antibacterial, anti-inflammatory, anti-pyretic and diuretic effects. Catalyzes the formation of azadirone. The sequence is that of Azadirone synthase LFS from Melia azedarach (Chinaberry tree).